The chain runs to 254 residues: Methyl-CpG-binding domain-containing protein 11 (254 aa).

The MBD domain occupies 4–74 (EEEVVSVELP…AEFDWTTSGT (71 aa)). Residues 56 to 254 (KSHPGNPAIA…EKTAEGEATG (199 aa)) form a disordered region. Basic and acidic residues-rich tracts occupy residues 80–97 (RISE…EPPK), 107–130 (SKKD…KDTE), 151–162 (ETERVNDAKENI), and 178–254 (ESMK…EATG). Position 116 is a phosphoserine (serine 116).

In terms of tissue distribution, expressed in leaves (around hydathodes), buds, flowers (carpels and pollen grains), stems (around nodes), siliques, mature seeds and roots.

The protein localises to the nucleus. Functionally, transcriptional regulator that binds DNA independently of its methylation status. Required during plant organogenesis and development. The chain is Methyl-CpG-binding domain-containing protein 11 (MBD11) from Arabidopsis thaliana (Mouse-ear cress).